Consider the following 344-residue polypeptide: Beta-1,4-galactosyltransferase 4 (344 aa).

The Cytoplasmic segment spans residues 1–12 (MGCNPPYLLPYR). A helical; Signal-anchor for type II membrane protein membrane pass occupies residues 13-38 (LRLLLFFTLCLTVVGWVTSNYFVDPI). The Lumenal segment spans residues 39–344 (QVIPKAKVFM…NITVDFWTGV (306 aa)). The cysteines at positions 77 and 118 are disulfide-linked. UDP-alpha-D-galactose-binding positions include 129-133 (PHRNR), 168-170 (FNR), and 195-196 (VD). The cysteines at positions 189 and 208 are disulfide-linked. Mn(2+) is bound at residue Asp-196. N-linked (GlcNAc...) asparagine glycosylation is present at Asn-220. Residues Tyr-224 and Trp-256 each coordinate UDP-alpha-D-galactose. 258–261 (GEDD) lines the N-acetyl-D-glucosamine pocket. Residue His-289 coordinates Mn(2+). 289 to 291 (HTR) is a binding site for UDP-alpha-D-galactose. Arg-301 contributes to the N-acetyl-D-glucosamine binding site. A glycan (N-linked (GlcNAc...) asparagine) is linked at Asn-335.

It belongs to the glycosyltransferase 7 family. It depends on Mn(2+) as a cofactor.

It is found in the golgi apparatus. The protein resides in the golgi stack membrane. The catalysed reaction is N-acetyl-D-glucosamine + UDP-alpha-D-galactose = beta-D-galactosyl-(1-&gt;4)-N-acetyl-D-glucosamine + UDP + H(+). The enzyme catalyses a beta-D-GlcNAc-(1-&gt;3)-beta-D-Gal-(1-&gt;4)-beta-D-Glc-(1&lt;-&gt;1)-Cer(d18:1(4E)) + UDP-alpha-D-galactose = a neolactoside nLc4Cer(d18:1(4E)) + UDP + H(+). It participates in protein modification; protein glycosylation. Its function is as follows. Galactose (Gal) transferase involved in the biosynthesis of glycoproteins, proteoglycans, and glycosyphingolipids. Catalyzes the transfer of Gal residue via a beta1-&gt;4 linkage from UDP-Gal to the non-reducing terminal N-acetyl glucosamine 6-O-sulfate (6-O-sulfoGlcNAc) in the linearly growing chain of both N- and O-linked keratan sulfate proteoglycans. Cooperates with B3GNT7 N-acetyl glucosamine transferase and CHST6 and CHST1 sulfotransferases to construct and elongate mono- and disulfated disaccharide units [-&gt;3Galbeta1-&gt;4(6-sulfoGlcNAcbeta)1-&gt;] and [-&gt;3(6-sulfoGalbeta)1-&gt;4(6-sulfoGlcNAcbeta)1-&gt;] within keratan sulfate polymer. In Cricetulus griseus (Chinese hamster), this protein is Beta-1,4-galactosyltransferase 4 (B4GALT4).